The primary structure comprises 246 residues: 3-deoxy-manno-octulosonate cytidylyltransferase (246 aa).

Belongs to the KdsB family.

The protein localises to the cytoplasm. The enzyme catalyses 3-deoxy-alpha-D-manno-oct-2-ulosonate + CTP = CMP-3-deoxy-beta-D-manno-octulosonate + diphosphate. It functions in the pathway nucleotide-sugar biosynthesis; CMP-3-deoxy-D-manno-octulosonate biosynthesis; CMP-3-deoxy-D-manno-octulosonate from 3-deoxy-D-manno-octulosonate and CTP: step 1/1. Its pathway is bacterial outer membrane biogenesis; lipopolysaccharide biosynthesis. In terms of biological role, activates KDO (a required 8-carbon sugar) for incorporation into bacterial lipopolysaccharide in Gram-negative bacteria. This Chloroherpeton thalassium (strain ATCC 35110 / GB-78) protein is 3-deoxy-manno-octulosonate cytidylyltransferase.